Consider the following 271-residue polypeptide: Formamidopyrimidine-DNA glycosylase (271 aa).

Residue proline 2 is the Schiff-base intermediate with DNA of the active site. Glutamate 3 (proton donor) is an active-site residue. Catalysis depends on lysine 57, which acts as the Proton donor; for beta-elimination activity. DNA contacts are provided by histidine 90, arginine 109, and lysine 151. The FPG-type zinc-finger motif lies at 236–270 (HVYSRGGETCTSCGNLLSEIRLGQRTTVFCGICQT). Catalysis depends on arginine 260, which acts as the Proton donor; for delta-elimination activity.

It belongs to the FPG family. Monomer. The cofactor is Zn(2+).

It catalyses the reaction Hydrolysis of DNA containing ring-opened 7-methylguanine residues, releasing 2,6-diamino-4-hydroxy-5-(N-methyl)formamidopyrimidine.. The enzyme catalyses 2'-deoxyribonucleotide-(2'-deoxyribose 5'-phosphate)-2'-deoxyribonucleotide-DNA = a 3'-end 2'-deoxyribonucleotide-(2,3-dehydro-2,3-deoxyribose 5'-phosphate)-DNA + a 5'-end 5'-phospho-2'-deoxyribonucleoside-DNA + H(+). Its function is as follows. Involved in base excision repair of DNA damaged by oxidation or by mutagenic agents. Acts as a DNA glycosylase that recognizes and removes damaged bases. Has a preference for oxidized purines, such as 7,8-dihydro-8-oxoguanine (8-oxoG). Has AP (apurinic/apyrimidinic) lyase activity and introduces nicks in the DNA strand. Cleaves the DNA backbone by beta-delta elimination to generate a single-strand break at the site of the removed base with both 3'- and 5'-phosphates. The protein is Formamidopyrimidine-DNA glycosylase of Shewanella baltica (strain OS195).